Reading from the N-terminus, the 352-residue chain is Anthranilate phosphoribosyltransferase (352 aa).

Residues Gly-83, 86–87 (GD), Thr-91, 93–96 (NIST), 111–119 (KHGGRSVSS), and Ala-123 contribute to the 5-phospho-alpha-D-ribose 1-diphosphate site. Gly-83 provides a ligand contact to anthranilate. Residue Ser-95 coordinates Mg(2+). Arg-169 contributes to the anthranilate binding site. 2 residues coordinate Mg(2+): Asp-228 and Glu-229.

The protein belongs to the anthranilate phosphoribosyltransferase family. Homodimer. The cofactor is Mg(2+).

It catalyses the reaction N-(5-phospho-beta-D-ribosyl)anthranilate + diphosphate = 5-phospho-alpha-D-ribose 1-diphosphate + anthranilate. It participates in amino-acid biosynthesis; L-tryptophan biosynthesis; L-tryptophan from chorismate: step 2/5. Functionally, catalyzes the transfer of the phosphoribosyl group of 5-phosphorylribose-1-pyrophosphate (PRPP) to anthranilate to yield N-(5'-phosphoribosyl)-anthranilate (PRA). The polypeptide is Anthranilate phosphoribosyltransferase (Neisseria meningitidis serogroup A / serotype 4A (strain DSM 15465 / Z2491)).